The following is a 443-amino-acid chain: Ribosomal protein uS12 methylthiotransferase RimO (443 aa).

The MTTase N-terminal domain occupies 11 to 121; that stretch reads PTVGFVSLGC…VMEAVHGALP (111 aa). Residues C20, C56, C85, C152, C156, and C159 each coordinate [4Fe-4S] cluster. A Radical SAM core domain is found at 138–375; it reads LTPRHYAYLK…METQAEISAA (238 aa). A TRAM domain is found at 378 to 443; sequence DAKIGRTIEV…DAHDLWATPV (66 aa).

The protein belongs to the methylthiotransferase family. RimO subfamily. [4Fe-4S] cluster is required as a cofactor.

It localises to the cytoplasm. It catalyses the reaction L-aspartate(89)-[ribosomal protein uS12]-hydrogen + (sulfur carrier)-SH + AH2 + 2 S-adenosyl-L-methionine = 3-methylsulfanyl-L-aspartate(89)-[ribosomal protein uS12]-hydrogen + (sulfur carrier)-H + 5'-deoxyadenosine + L-methionine + A + S-adenosyl-L-homocysteine + 2 H(+). In terms of biological role, catalyzes the methylthiolation of an aspartic acid residue of ribosomal protein uS12. This chain is Ribosomal protein uS12 methylthiotransferase RimO, found in Thiobacillus denitrificans (strain ATCC 25259 / T1).